The sequence spans 374 residues: Chaperone protein DnaJ (374 aa).

A J domain is found at 5 to 70; it reads DFYEILGLGK…QKRDAYDRYG (66 aa). The disordered stretch occupies residues 28–47; sequence LAMKHHPDRNPDSKGAEDKF. A compositionally biased stretch (basic and acidic residues) spans 35–47; that stretch reads DRNPDSKGAEDKF. The segment at 134 to 212 adopts a CR-type zinc-finger fold; that stretch reads GYDTTIRVPS…CSGAGKIKRN (79 aa). 8 residues coordinate Zn(2+): Cys147, Cys150, Cys164, Cys167, Cys186, Cys189, Cys200, and Cys203. CXXCXGXG motif repeat units lie at residues 147 to 154, 164 to 171, 186 to 193, and 200 to 207; these read CETCDGSG, CTTCGGHG, CPKCHGSG, and CTACSGAG.

Belongs to the DnaJ family. As to quaternary structure, homodimer. The cofactor is Zn(2+).

The protein resides in the cytoplasm. In terms of biological role, participates actively in the response to hyperosmotic and heat shock by preventing the aggregation of stress-denatured proteins and by disaggregating proteins, also in an autonomous, DnaK-independent fashion. Unfolded proteins bind initially to DnaJ; upon interaction with the DnaJ-bound protein, DnaK hydrolyzes its bound ATP, resulting in the formation of a stable complex. GrpE releases ADP from DnaK; ATP binding to DnaK triggers the release of the substrate protein, thus completing the reaction cycle. Several rounds of ATP-dependent interactions between DnaJ, DnaK and GrpE are required for fully efficient folding. Also involved, together with DnaK and GrpE, in the DNA replication of plasmids through activation of initiation proteins. The polypeptide is Chaperone protein DnaJ (Herminiimonas arsenicoxydans).